A 280-amino-acid chain; its full sequence is Succinate dehydrogenase [ubiquinone] iron-sulfur subunit, mitochondrial (280 aa).

A mitochondrion-targeting transit peptide spans Met1 to Gly28. The 2Fe-2S ferredoxin-type domain maps to Lys40–Pro131. N6-acetyllysine is present on residues Lys51 and Lys55. Residues Cys93, Cys98, Cys101, and Cys113 each contribute to the [2Fe-2S] cluster site. The segment at Phe146 to Trp218 is interaction with SDHAF1. A 4Fe-4S ferredoxin-type domain is found at Glu176 to Tyr206. [4Fe-4S] cluster-binding residues include Cys186, Cys189, and Cys192. Cys196 contributes to the [3Fe-4S] cluster binding site. Position 201 (Trp201) interacts with a ubiquinone. 2 residues coordinate [3Fe-4S] cluster: Cys243 and Cys249. Cys253 is a binding site for [4Fe-4S] cluster.

The protein belongs to the succinate dehydrogenase/fumarate reductase iron-sulfur protein family. As to quaternary structure, component of complex II composed of four subunits: the flavoprotein (FP) SDHA, iron-sulfur protein (IP) SDHB, and a cytochrome b560 composed of SDHC and SDHD. Interacts with SDHAF1; the interaction is required for iron-sulfur cluster incorporation into SDHB. The cofactor is [2Fe-2S] cluster. [3Fe-4S] cluster is required as a cofactor. Requires [4Fe-4S] cluster as cofactor.

It is found in the mitochondrion inner membrane. It carries out the reaction a quinone + succinate = fumarate + a quinol. The catalysed reaction is (R)-malate + a quinone = enol-oxaloacetate + a quinol. The enzyme catalyses (S)-malate + a quinone = enol-oxaloacetate + a quinol. It participates in carbohydrate metabolism; tricarboxylic acid cycle; fumarate from succinate (eukaryal route): step 1/1. With respect to regulation, enol-oxaloacetate inhibits the succinate dehydrogenase activity. In terms of biological role, iron-sulfur protein (IP) subunit of the succinate dehydrogenase complex (mitochondrial respiratory chain complex II), responsible for transferring electrons from succinate to ubiquinone (coenzyme Q). SDH also oxidizes malate to the non-canonical enol form of oxaloacetate, enol-oxaloacetate. Enol-oxaloacetate, which is a potent inhibitor of the succinate dehydrogenase activity, is further isomerized into keto-oxaloacetate. In Sus scrofa (Pig), this protein is Succinate dehydrogenase [ubiquinone] iron-sulfur subunit, mitochondrial (SDHB).